The primary structure comprises 116 residues: Mitochondrial import inner membrane translocase subunit PAM16 like 2 (116 aa).

A mitochondrion-targeting transit peptide spans 1–27; it reads MAGRLLANLIVMGSGIIGRAVFQAYRQ. Positions 57 to 106 are J-like; the sequence is EARQILGVTEKTSWEEILQKYDKLFENNAKAGSFYLQSKVHRAKECLEVV.

This sequence belongs to the TIM16/PAM16 family. As to expression, expressed constitutively and ubiquitously, except in root tips, at low levels.

Its subcellular location is the mitochondrion inner membrane. The protein resides in the cytoplasm. Regulates ATP-dependent protein translocation into the mitochondrial matrix. Involved in the uptake of thaxtomin, a phytotoxin produced by Streptomyces bacteria, that causes dramatic cell swelling, reduced seedling growth, and inhibition of cellulose synthesis. Modulates polar auxin transport. Involved in importing a negative regulator of plant immunity into mitochondria, thus protecting plants from over-accumulation of reactive oxygen species (ROS) and preventing autoimmunity. Confers sensitivity to virulent pathogens such as the oomycete H.arabidopsidis Noco2 and the bacteria P.syringae pv. maculicola ES4326. This is Mitochondrial import inner membrane translocase subunit PAM16 like 2 from Arabidopsis thaliana (Mouse-ear cress).